Here is a 180-residue protein sequence, read N- to C-terminus: Ribosome rescue factor SmrB (180 aa).

The Smr domain occupies 98 to 173; it reads LDLHGLTQLI…GDAALLLLVE (76 aa).

The protein belongs to the SmrB family. In terms of assembly, associates with collided ribosomes, but not with correctly translating polysomes.

Its function is as follows. Acts as a ribosome collision sensor. Detects stalled/collided disomes (pairs of ribosomes where the leading ribosome is stalled and a second ribosome has collided with it) and endonucleolytically cleaves mRNA at the 5' boundary of the stalled ribosome. Stalled/collided disomes form a new interface (primarily via the 30S subunits) that binds SmrB. Cleaved mRNA becomes available for tmRNA ligation, leading to ribosomal subunit dissociation and rescue of stalled ribosomes. In Proteus mirabilis (strain HI4320), this protein is Ribosome rescue factor SmrB.